A 243-amino-acid polypeptide reads, in one-letter code: Epoxyqueuosine reductase QueH (243 aa).

Residues 1–16 (MHRTKLEQKQPHFDAQ) show a composition bias toward basic and acidic residues. The segment at 1–30 (MHRTKLEQKQPHFDAQKRRKKECKNSNTPF) is disordered. [4Fe-4S] cluster is bound by residues C49, C50, C128, and C131. C211 and C213 are joined by a disulfide.

Belongs to the QueH family.

The enzyme catalyses epoxyqueuosine(34) in tRNA + AH2 = queuosine(34) in tRNA + A + H2O. The protein operates within tRNA modification; tRNA-queuosine biosynthesis. In terms of biological role, catalyzes the conversion of epoxyqueuosine (oQ) to queuosine (Q), which is a hypermodified base found in the wobble positions of tRNA(Asp), tRNA(Asn), tRNA(His) and tRNA(Tyr). In Histophilus somni (strain 129Pt) (Haemophilus somnus), this protein is Epoxyqueuosine reductase QueH.